Consider the following 385-residue polypeptide: Deoxyguanosinetriphosphate triphosphohydrolase-like protein (385 aa).

The HD domain maps to 75–197 (RLTHTLEVGQ…VDAADALAYT (123 aa)).

The protein belongs to the dGTPase family. Type 2 subfamily.

This is Deoxyguanosinetriphosphate triphosphohydrolase-like protein from Deinococcus geothermalis (strain DSM 11300 / CIP 105573 / AG-3a).